We begin with the raw amino-acid sequence, 305 residues long: Hydrogen peroxide-inducible genes activator (305 aa).

The HTH lysR-type domain maps to 1-58; the sequence is MNIRDLEYLVALAEHRHFRRAADSCHVSQPTLSGQIRKLEDELGVMLLERTSRKVLFT. Positions 18–37 form a DNA-binding region, H-T-H motif; sequence FRRAADSCHVSQPTLSGQIR. 2 cysteine pairs are disulfide-bonded: cysteine 180-cysteine 259 and cysteine 199-cysteine 208. Position 199 is a cysteine sulfenic acid (-SOH); alternate (cysteine 199). Cysteine 199 carries the post-translational modification S-glutathionyl cysteine; alternate. The residue at position 199 (cysteine 199) is an S-nitrosocysteine; alternate.

It belongs to the LysR transcriptional regulatory family. Homodimer and homotetramer. In terms of processing, oxidized on Cys-199; the Cys-SOH formed in response to oxidative signaling triggers a conformational change and the onset of transcriptional activity with a specific DNA-binding affinity. Cys-199-SOH rapidly reacts with Cys-208-SH to form a disulfide bond. S-nitrosylation in response to nitrosative signaling triggers a conformational change and the onset of transcriptional activity with a specific DNA-binding affinity. Post-translationally, glutathionylation in response to redox signaling triggers the onset of transcriptional activity with a specific DNA-binding affinity.

Its activity is regulated as follows. Activated by oxidation of Cys-199 resulting in the alternative formation of cystine, sulfenic acid, S-nitroso- or glutathione-bound cysteine. Its function is as follows. Hydrogen peroxide sensor. Activates the expression of a regulon of hydrogen peroxide-inducible genes such as katG, gor, ahpC, ahpF, oxyS (a regulatory RNA), dps, fur and grxA. OxyR expression is negatively autoregulated by binding to a 43 bp region upstream of its own coding sequence. OxyR is inactivated by reduction of its essential disulfide bond by the product of GrxA, itself positively regulated by OxyR. Also has a positive regulatory effect on the production of surface proteins that control the colony morphology and auto-aggregation ability. The protein is Hydrogen peroxide-inducible genes activator (oxyR) of Escherichia coli O157:H7.